A 180-amino-acid polypeptide reads, in one-letter code: Meiotic recombination protein rec15 (180 aa).

Homomer. Interacts (via C-terminus) with hop1 (via C-terminus); the interaction is direct. Interacts (via C-terminus) with rec10; the interaction is direct. Interacts with mde2; the interaction is direct.

The protein localises to the nucleus. The protein resides in the chromosome. Its function is as follows. Required during the early stages of meiosis for meiotic recombination. This Schizosaccharomyces pombe (strain 972 / ATCC 24843) (Fission yeast) protein is Meiotic recombination protein rec15.